The following is a 591-amino-acid chain: Laccase (591 aa).

The signal sequence occupies residues 1–20; the sequence is MPSFFRALFSGLIASQLSWA. Plastocyanin-like domains follow at residues 66–189 and 198–356; these read VRQY…IQID and IDLG…HPTN. Asn121 carries N-linked (GlcNAc...) asparagine glycosylation. Cu cation is bound by residues His126, His128, His171, and His173. Cystine bridges form between Cys147/Cys571 and Cys332/Cys366. N-linked (GlcNAc...) asparagine glycans are attached at residues Asn234, Asn242, Asn265, and Asn323. 2 N-linked (GlcNAc...) asparagine glycosylation sites follow: Asn407 and Asn425. The region spanning 416–551 is the Plastocyanin-like 3 domain; sequence GHPITQYVIN…AGLGNTFLEQ (136 aa). Positions 463, 466, 468, 533, 534, 535, and 539 each coordinate Cu cation.

Belongs to the multicopper oxidase family. It depends on Cu cation as a cofactor.

It is found in the secreted. It carries out the reaction 4 hydroquinone + O2 = 4 benzosemiquinone + 2 H2O. Functionally, lignin degradation and detoxification of lignin-derived products. This Cryphonectria parasitica (Chestnut blight fungus) protein is Laccase (LAC-1).